We begin with the raw amino-acid sequence, 902 residues long: 4-hydroxyphenylacetate decarboxylase glycyl radical subunit (902 aa).

In terms of domain architecture, PFL spans 38–774 (KRAEDLLDVY…ATLATPDGRL (737 aa)). Residues S348 and C507 each coordinate 4-hydroxyphenylacetate. The Cysteine radical intermediate role is filled by C507. The active-site Proton donor is E509. 2 residues coordinate 4-hydroxyphenylacetate: H540 and E641. One can recognise a Glycine radical domain in the interval 782–902 (GSVSAYAGTD…VIARTEYEGV (121 aa)). At G877 the chain carries Glycine radical.

Belongs to the glycyl radical enzyme (GRE) family. HPAD subfamily. As to quaternary structure, heterooctamer consisting of 4 large (HpdB) subunits and 4 small (HpdC) subunits, arranged as a tetramer of heterodimers. Also forms a catalytically inactive homodimer. Post-translationally, requires the activating protein CsdA to generate the key active site glycyl radical that is involved in catalysis. Phosphorylated on serine. Phosphorylation may trigger the formation of the active heterooctamers and thereby regulates enzyme activity.

The enzyme catalyses 4-hydroxyphenylacetate + H(+) = 4-methylphenol + CO2. It carries out the reaction 3,4-dihydroxyphenylacetate + H(+) = 4-methylcatechol + CO2. Functionally, glycyl radical subunit of the HPA decarboxylase that decarboxylates phenylacetates with a hydroxyl group in the p-position. Active toward 4-hydroxyphenylacetate and 3,4-dihydroxyphenylacetate, forming 4-methylphenol and 4-methylcatechol, respectively. Is likely involved in the catabolism of aromatic amino acids such as tyrosine fermentation. 4-methylphenol (p-cresol) formation provides metabolic toxicity, which allows an active suppression of other microbes and may provide growth advantages for the producers in highly competitive environments. The large subunit is the catalytic subunit that binds the substrate. The chain is 4-hydroxyphenylacetate decarboxylase glycyl radical subunit from Clostridioides difficile (strain 630) (Peptoclostridium difficile).